The following is a 1073-amino-acid chain: Serine/threonine-protein kinase 11-interacting protein (1073 aa).

LRR repeat units follow at residues 166–187, 189–210, 212–233, 236–257, 258–279, and 283–304; these read ELQT…LQLL, ALRV…LTTL, ELEY…GIFS, KLLT…EQLV, NLQH…APLS, and YLKK…RSAT. Disordered regions lie at residues 389 to 409, 455 to 533, 724 to 817, and 834 to 859; these read VKVR…SQAL, SRSA…EKPE, EVSS…QGMK, and MGSY…SEET. Residues 515–532 show a composition bias toward acidic residues; sequence REEEADELMLGEEEDEKP. Polar residues-rich tracts occupy residues 779–788 and 843–859; these read MDTSNSTRTP and RGPT…SEET.

The protein belongs to the STK11IP family.

Its subcellular location is the cytoplasm. The polypeptide is Serine/threonine-protein kinase 11-interacting protein (STK11IP) (Gallus gallus (Chicken)).